A 252-amino-acid polypeptide reads, in one-letter code: Ribosomal RNA small subunit methyltransferase J (252 aa).

Residues 101–102, 117–118, 153–154, and Asp-171 contribute to the S-adenosyl-L-methionine site; these read RD, ER, and SS.

Belongs to the methyltransferase superfamily. RsmJ family.

The protein localises to the cytoplasm. The catalysed reaction is guanosine(1516) in 16S rRNA + S-adenosyl-L-methionine = N(2)-methylguanosine(1516) in 16S rRNA + S-adenosyl-L-homocysteine + H(+). Its function is as follows. Specifically methylates the guanosine in position 1516 of 16S rRNA. The polypeptide is Ribosomal RNA small subunit methyltransferase J (Salmonella heidelberg (strain SL476)).